A 368-amino-acid chain; its full sequence is UDP-N-acetylglucosamine--N-acetylmuramyl-(pentapeptide) pyrophosphoryl-undecaprenol N-acetylglucosamine transferase (368 aa).

UDP-N-acetyl-alpha-D-glucosamine is bound by residues 10–12 (TGG), asparagine 126, serine 200, isoleucine 255, and glutamine 300.

Belongs to the glycosyltransferase 28 family. MurG subfamily.

The protein localises to the cell membrane. The catalysed reaction is Mur2Ac(oyl-L-Ala-gamma-D-Glu-L-Lys-D-Ala-D-Ala)-di-trans,octa-cis-undecaprenyl diphosphate + UDP-N-acetyl-alpha-D-glucosamine = beta-D-GlcNAc-(1-&gt;4)-Mur2Ac(oyl-L-Ala-gamma-D-Glu-L-Lys-D-Ala-D-Ala)-di-trans,octa-cis-undecaprenyl diphosphate + UDP + H(+). It participates in cell wall biogenesis; peptidoglycan biosynthesis. Its function is as follows. Cell wall formation. Catalyzes the transfer of a GlcNAc subunit on undecaprenyl-pyrophosphoryl-MurNAc-pentapeptide (lipid intermediate I) to form undecaprenyl-pyrophosphoryl-MurNAc-(pentapeptide)GlcNAc (lipid intermediate II). In Lactobacillus acidophilus (strain ATCC 700396 / NCK56 / N2 / NCFM), this protein is UDP-N-acetylglucosamine--N-acetylmuramyl-(pentapeptide) pyrophosphoryl-undecaprenol N-acetylglucosamine transferase.